The chain runs to 434 residues: uncharacterized protein (434 aa).

Helical transmembrane passes span 27–47 (IFLL…QSVI), 64–84 (FYLS…FVNW), 244–264 (IILA…ATVL), 289–309 (VPVN…PSLL), and 387–407 (LILT…GAVF).

The protein belongs to the CbiQ family.

Its subcellular location is the cell membrane. This is an uncharacterized protein from Mycoplasma pneumoniae (strain ATCC 29342 / M129 / Subtype 1) (Mycoplasmoides pneumoniae).